Here is a 207-residue protein sequence, read N- to C-terminus: MGEKLTLEEGEFLVRLARKAIVHYLESGKKIEEKPPTQRLAEKRGVFVTLKKYPDDELRGCIGFPEPIKPLVEATVEAAISAATGDPRFPPMRDPSEMEEIKIEVSVLTPPKKLEVDNPKEYVEKIEIGRHGIIVRRGARSGLLLPQVPVEEGWDEIEFLSHACLKAGLPPDWWCSPDCEIYVFEAQVFEEEEPEGPVRERDLAEEQ.

Residues 8–200 enclose the AMMECR1 domain; the sequence is EEGEFLVRLA…EEEPEGPVRE (193 aa).

This Methanopyrus kandleri (strain AV19 / DSM 6324 / JCM 9639 / NBRC 100938) protein is Protein MK0488.